The sequence spans 1241 residues: ATP-dependent helicase/nuclease subunit A (1241 aa).

The region spanning Ser-12 to Arg-485 is the UvrD-like helicase ATP-binding domain. ATP is bound at residue Ala-33–Thr-40. A UvrD-like helicase C-terminal domain is found at Gly-505–Gly-805.

Belongs to the helicase family. AddA subfamily. Heterodimer of AddA and AddB/RexB. It depends on Mg(2+) as a cofactor.

It carries out the reaction Couples ATP hydrolysis with the unwinding of duplex DNA by translocating in the 3'-5' direction.. The enzyme catalyses ATP + H2O = ADP + phosphate + H(+). The heterodimer acts as both an ATP-dependent DNA helicase and an ATP-dependent, dual-direction single-stranded exonuclease. Recognizes the chi site generating a DNA molecule suitable for the initiation of homologous recombination. The AddA nuclease domain is required for chi fragment generation; this subunit has the helicase and 3' -&gt; 5' nuclease activities. The protein is ATP-dependent helicase/nuclease subunit A of Bacillus cereus (strain ATCC 14579 / DSM 31 / CCUG 7414 / JCM 2152 / NBRC 15305 / NCIMB 9373 / NCTC 2599 / NRRL B-3711).